Consider the following 247-residue polypeptide: MNVLSCSMNTLRGLYDISGVEVGQHFYWQIGGFQVHAQVLITSWVVIAILLGSAFIAVRNPQTVPTATQNFFEYVLEFIRDVSKTQIGEEYGPWVPFIGTLFLFIFVSNWSGALLPWKIIELPHGELAAPTNDINTTVALALLTSIAYFYAGLSKKGLGYFSKYIQPTPILLPINILEDFTKPLSLSFRLFGNILADELVVVVLVSLVPLVVPIPVMFLGLFTSGIQALIFATLAAAYIGESMEGHH.

5 helical membrane-spanning segments follow: residues 38–58 (QVLI…FIAV), 95–115 (VPFI…GALL), 134–154 (INTT…AGLS), 199–219 (LVVV…VMFL), and 220–240 (GLFT…AYIG).

Belongs to the ATPase A chain family. In terms of assembly, F-type ATPases have 2 components, CF(1) - the catalytic core - and CF(0) - the membrane proton channel. CF(1) has five subunits: alpha(3), beta(3), gamma(1), delta(1), epsilon(1). CF(0) has four main subunits: a, b, b' and c.

Its subcellular location is the plastid. It is found in the chloroplast thylakoid membrane. In terms of biological role, key component of the proton channel; it plays a direct role in the translocation of protons across the membrane. In Citrus sinensis (Sweet orange), this protein is ATP synthase subunit a, chloroplastic.